The primary structure comprises 78 residues: Acyl carrier protein (78 aa).

The 76-residue stretch at 2 to 77 (SDTAERIKKI…DAVSYIDEHK (76 aa)) folds into the Carrier domain. Ser37 carries the post-translational modification O-(pantetheine 4'-phosphoryl)serine.

The protein belongs to the acyl carrier protein (ACP) family. Post-translationally, 4'-phosphopantetheine is transferred from CoA to a specific serine of apo-ACP by AcpS. This modification is essential for activity because fatty acids are bound in thioester linkage to the sulfhydryl of the prosthetic group.

Its subcellular location is the cytoplasm. It participates in lipid metabolism; fatty acid biosynthesis. Its function is as follows. Carrier of the growing fatty acid chain in fatty acid biosynthesis. The chain is Acyl carrier protein from Zymomonas mobilis subsp. mobilis (strain ATCC 31821 / ZM4 / CP4).